A 355-amino-acid chain; its full sequence is MAFLCPVRMRRDKKKATNASIERDLPAVGVLGMGRITGSSSIETLVRVGIEKEHGLSPDSKMVVLHDFTPCVDDELEVKRGQLVNILYRENDWVYVIGQDSRQEGFIPFSYCAPCNTQLADLAVKKKLPREQCPEQPIEENIPLLGTDNKLDVLCDETLNPGSANSIENTLLVEPECTPFVKEPSGRCIVLYTFIARDENDLSVERGEFVTVLNREDPDWFWIMRSDGQEGFVPASFIYPADSVRVLQQQKATLNAMETILQQGQQGQQSQQQQQPQLGLGTDDLRYHGTELVMLYDYKAQAPDDLYLSVRRGDWIYADLTNQTVDGWLWAYAPKTRKYGFIPKAYARPPAMTSL.

SH3 domains follow at residues 57–117 (SPDS…PCNT), 183–243 (EPSG…PADS), and 287–352 (YHGT…PPAM).

As to quaternary structure, interacts with dachs (via C-terminus); the interaction is direct. Interacts (via N-terminus including SH3 domain 1) with palmitoyltransferase app; this leads to palmitoylation of Dlish by app. Also interacts with dco, ft, ft-regulated E3 ubiquitin ligase Fbxl7, F-box protein slmb and SCF E3 ubiquitin-protein ligase complex component Cul1. Post-translationally, palmitoylated by app.

The protein localises to the cytoplasm. It localises to the cell cortex. Functionally, required for the apical cell cortex localization, total cellular level and full activity of dachs. The polypeptide is SH3 domain-containing protein Dlish (Drosophila melanogaster (Fruit fly)).